The sequence spans 423 residues: Mannitol-1-phosphate 5-dehydrogenase (423 aa).

Zn(2+) contacts are provided by Cys-40, His-69, and Glu-70.

It belongs to the zinc-containing alcohol dehydrogenase family. The cofactor is Zn(2+).

The catalysed reaction is D-mannitol 1-phosphate + NAD(+) = beta-D-fructose 6-phosphate + NADH + H(+). Seems to be involved in mannitol utilization. Complements an E.coli mtlD deletion mutant. In Aliivibrio fischeri (strain ATCC 700601 / ES114) (Vibrio fischeri), this protein is Mannitol-1-phosphate 5-dehydrogenase.